A 1178-amino-acid polypeptide reads, in one-letter code: Pyruvate carboxylase, mitochondrial (1178 aa).

A mitochondrion-targeting transit peptide spans 1–20; sequence MLKFQTVRGGLRLLGVRRSS. Ser-21 carries the phosphoserine modification. An N6-acetyllysine mark is found at Lys-35 and Lys-39. In terms of domain architecture, Biotin carboxylation spans 36–486; the sequence is PIKKVMVANR…DTQFIDENPE (451 aa). The residue at position 79 (Lys-79) is an N6-acetyllysine; alternate. Lys-79 is subject to N6-succinyllysine; alternate. Lys-148 and Lys-152 each carry N6-acetyllysine. Residues Lys-152 and Glu-236 each coordinate ATP. An ATP-grasp domain is found at 156–353; that stretch reads RAIAIAAGVP…LVHAQIHVSE (198 aa). At Lys-241 the chain carries N6-acetyllysine. His-271 contacts ATP. Lys-297, Lys-316, and Lys-319 each carry N6-acetyllysine. Residue Arg-328 is part of the active site. Residue Lys-434 is modified to N6-acetyllysine. An N6-succinyllysine modification is found at Lys-442. The 270-residue stretch at 563–832 folds into the Pyruvate carboxyltransferase domain; sequence LLLMDTTFRD…DTEVPLERVF (270 aa). 571 to 575 lines the substrate pocket; the sequence is RDAHQ. Asp-572 contacts Mn(2+). Residue Lys-589 is modified to N6-acetyllysine. Arg-644 contributes to the substrate binding site. Residues Lys-661 and Lys-717 each carry the N6-acetyllysine modification. Lys-741 serves as a coordination point for Mn(2+). Lys-741 is modified (N6-carboxylysine). Lys-748 carries the post-translational modification N6-acetyllysine. His-771 and His-773 together coordinate Mn(2+). Lys-892 carries the post-translational modification N6-acetyllysine. Thr-908 contributes to the substrate binding site. The residue at position 969 (Lys-969) is an N6-acetyllysine. Lys-988 is modified (N6-acetyllysine; alternate). N6-succinyllysine; alternate is present on Lys-988. The residue at position 992 (Lys-992) is an N6-acetyllysine. The residue at position 1003 (Thr-1003) is a Phosphothreonine. Lys-1061, Lys-1090, and Lys-1124 each carry N6-acetyllysine. The Biotinyl-binding domain maps to 1109–1178; it reads KGQIGAPMPG…EGDDLILEIE (70 aa). Lys-1144 carries the post-translational modification N6-biotinyllysine.

Homotetramer. Interacts (via the biotin carboxylation domain) with SIRT4. Biotin is required as a cofactor. Mn(2+) serves as cofactor. Post-translationally, acetylation of Lys-316 is observed in liver mitochondria from fasted mice but not from fed mice. Acetylation of Lys-748 might play a role in catalytic activity regulation. In terms of tissue distribution, liver, kidney, adipose tissue, liver and brain.

The protein resides in the mitochondrion matrix. The enzyme catalyses hydrogencarbonate + pyruvate + ATP = oxaloacetate + ADP + phosphate + H(+). It participates in carbohydrate biosynthesis; gluconeogenesis. Functionally, pyruvate carboxylase catalyzes a 2-step reaction, involving the ATP-dependent carboxylation of the covalently attached biotin in the first step and the transfer of the carboxyl group to pyruvate in the second. Catalyzes in a tissue specific manner, the initial reactions of glucose (liver, kidney) and lipid (adipose tissue, liver, brain) synthesis from pyruvate. This chain is Pyruvate carboxylase, mitochondrial (Pc), found in Mus musculus (Mouse).